Consider the following 348-residue polypeptide: 2-methyl-6-phytyl-1,4-hydroquinone methyltransferase 2, chloroplastic (348 aa).

The tract at residues 1–48 (MAMASSAYAPAGGVGTHSAPGRIRPPRGLGFSTTTTKSRPLVLTRRGG) is disordered. The N-terminal 59 residues, 1–59 (MAMASSAYAPAGGVGTHSAPGRIRPPRGLGFSTTTTKSRPLVLTRRGGGGGNISVARLR), are a transit peptide targeting the chloroplast. Residues 60–317 (CAASSSSAAA…PVNPITFLFR (258 aa)) are Chloroplast intermembrane-facing. The tract at residues 125 to 134 (VVDVGGGTGF) is SAM motif I. Positions 170-183 (VTIMEGDAEDLPFP) are SAM motif II. The segment at 211–224 (RVLRLGGVACMIGP) is SAM motif III. A helical transmembrane segment spans residues 318–338 (FLMGTICAAYYVLVPIYMWIK). The Stromal portion of the chain corresponds to 339–348 (DQIVPKGMPI).

The protein belongs to the class I-like SAM-binding methyltransferase superfamily. MPBQ/MBSQ MT family.

It is found in the plastid. The protein localises to the chloroplast inner membrane. The enzyme catalyses 2-methyl-6-phytyl-1,4-benzene-1,4-diol + S-adenosyl-L-methionine = 2,3-dimethyl-6-phytylbenzene-1,4-diol + S-adenosyl-L-homocysteine + H(+). The catalysed reaction is 2-methyl-6-(all-trans-nonaprenyl)benzene-1,4-diol + S-adenosyl-L-methionine = plastoquinol-9 + S-adenosyl-L-homocysteine + H(+). It carries out the reaction 6-geranylgeranyl-2-methylbenzene-1,4-diol + S-adenosyl-L-methionine = 6-geranylgeranyl-2,3-dimethylbenzene-1,4-diol + S-adenosyl-L-homocysteine + H(+). It functions in the pathway cofactor biosynthesis; tocopherol biosynthesis. Its function is as follows. Involved in a key methylation step in both tocopherols (vitamin E) and plastoquinone synthesis. Catalyzes the conversion of 2-methyl-6-phytyl-1,4-hydroquinone (MPBQ) to 2,3-dimethyl-6-phytyl-1,4-hydroquinone (DMPQ, a substrate for tocopherol cyclase), and 2-methyl-6-solanyl-1,4-benzoquinone (MSBQ) to plastoquinone. The sequence is that of 2-methyl-6-phytyl-1,4-hydroquinone methyltransferase 2, chloroplastic from Oryza sativa subsp. japonica (Rice).